The chain runs to 123 residues: Small ribosomal subunit protein uS12 (123 aa).

Position 89 is a 3-methylthioaspartic acid (D89). Residues 102–123 form a disordered region; the sequence is LDTQGVKDRKQGRSKYGAKRPK. Basic residues predominate over residues 113-123; the sequence is GRSKYGAKRPK.

The protein belongs to the universal ribosomal protein uS12 family. As to quaternary structure, part of the 30S ribosomal subunit. Contacts proteins S8 and S17. May interact with IF1 in the 30S initiation complex.

With S4 and S5 plays an important role in translational accuracy. Functionally, interacts with and stabilizes bases of the 16S rRNA that are involved in tRNA selection in the A site and with the mRNA backbone. Located at the interface of the 30S and 50S subunits, it traverses the body of the 30S subunit contacting proteins on the other side and probably holding the rRNA structure together. The combined cluster of proteins S8, S12 and S17 appears to hold together the shoulder and platform of the 30S subunit. This Magnetococcus marinus (strain ATCC BAA-1437 / JCM 17883 / MC-1) protein is Small ribosomal subunit protein uS12.